The primary structure comprises 569 residues: DNA-binding protein eta2 (569 aa).

Disordered regions lie at residues 1–26 (MMLAIDMTINENQGTRSNLESPTLSC) and 133–159 (KRKIARSSSDDSESKVESTNSFNAKKR). A compositionally biased stretch (polar residues) spans 9-26 (INENQGTRSNLESPTLSC). Serine 21 carries the post-translational modification Phosphoserine. Myb-like domains follow at residues 322–371 (LDPK…RFVV) and 377–459 (ETID…EKTI). Residues 459 to 487 (IASYSSNQRQEEDQGKKRKKRKKKKSKGK) form a disordered region. Over residues 474-487 (KKRKKRKKKKSKGK) the composition is skewed to basic residues.

The protein localises to the nucleus. This is DNA-binding protein eta2 (eta2) from Schizosaccharomyces pombe (strain 972 / ATCC 24843) (Fission yeast).